Consider the following 138-residue polypeptide: Acidic phospholipase A2 pgPLA 1b/pgPLA 2b (138 aa).

A signal peptide spans 1–16 (MRTLWIMAVLLVGVKG). Intrachain disulfides connect cysteine 42–cysteine 131, cysteine 44–cysteine 60, cysteine 59–cysteine 111, cysteine 65–cysteine 138, cysteine 66–cysteine 104, cysteine 73–cysteine 97, and cysteine 91–cysteine 102. Ca(2+)-binding residues include tyrosine 43, glycine 45, and glycine 47. Residue histidine 63 is part of the active site. Aspartate 64 provides a ligand contact to Ca(2+). Aspartate 105 is an active-site residue.

Belongs to the phospholipase A2 family. Group II subfamily. D49 sub-subfamily. It depends on Ca(2+) as a cofactor. Expressed by the venom gland.

Its subcellular location is the secreted. It carries out the reaction a 1,2-diacyl-sn-glycero-3-phosphocholine + H2O = a 1-acyl-sn-glycero-3-phosphocholine + a fatty acid + H(+). In terms of biological role, PLA2 catalyzes the calcium-dependent hydrolysis of the 2-acyl groups in 3-sn-phosphoglycerides. This chain is Acidic phospholipase A2 pgPLA 1b/pgPLA 2b, found in Protobothrops flavoviridis (Habu).